Consider the following 338-residue polypeptide: tRNA N6-adenosine threonylcarbamoyltransferase (338 aa).

His111 and His115 together coordinate Fe cation. Residues 134-138, Asp167, Gly180, and Asn275 contribute to the substrate site; that span reads LLSGG. Residue Asp304 coordinates Fe cation.

It belongs to the KAE1 / TsaD family. Requires Fe(2+) as cofactor.

Its subcellular location is the cytoplasm. It catalyses the reaction L-threonylcarbamoyladenylate + adenosine(37) in tRNA = N(6)-L-threonylcarbamoyladenosine(37) in tRNA + AMP + H(+). Required for the formation of a threonylcarbamoyl group on adenosine at position 37 (t(6)A37) in tRNAs that read codons beginning with adenine. Is involved in the transfer of the threonylcarbamoyl moiety of threonylcarbamoyl-AMP (TC-AMP) to the N6 group of A37, together with TsaE and TsaB. TsaD likely plays a direct catalytic role in this reaction. The polypeptide is tRNA N6-adenosine threonylcarbamoyltransferase (Leptospira borgpetersenii serovar Hardjo-bovis (strain JB197)).